Here is a 105-residue protein sequence, read N- to C-terminus: Large ribosomal subunit protein eL30 (105 aa).

This sequence belongs to the eukaryotic ribosomal protein eL30 family.

The protein is Large ribosomal subunit protein eL30 (RPL30) of Eremothecium gossypii (strain ATCC 10895 / CBS 109.51 / FGSC 9923 / NRRL Y-1056) (Yeast).